The chain runs to 982 residues: Coatomer subunit beta (982 aa).

4 HEAT repeats span residues 16 to 53, 130 to 167, 241 to 278, and 317 to 352; these read SGAP…NGEP, ELVE…RFPE, YDKG…SPTA, and LQDS…NQNS.

Oligomeric complex that consists of at least the alpha, beta, beta', gamma, delta, epsilon and zeta subunits.

Its subcellular location is the cytoplasm. The protein resides in the golgi apparatus membrane. The protein localises to the cytoplasmic vesicle. It is found in the COPI-coated vesicle membrane. Its function is as follows. The coatomer is a cytosolic protein complex that binds to dilysine motifs and reversibly associates with Golgi non-clathrin-coated vesicles, which further mediate biosynthetic protein transport from the ER, via the Golgi up to the trans Golgi network. Coatomer complex is required for budding from Golgi membranes, and is essential for the retrograde Golgi-to-ER transport of dilysine-tagged proteins. This Trypanosoma brucei brucei protein is Coatomer subunit beta.